Consider the following 309-residue polypeptide: Homoserine kinase (309 aa).

91–101 lines the ATP pocket; the sequence is PIGSGLGSSAC.

This sequence belongs to the GHMP kinase family. Homoserine kinase subfamily.

The protein localises to the cytoplasm. It catalyses the reaction L-homoserine + ATP = O-phospho-L-homoserine + ADP + H(+). The protein operates within amino-acid biosynthesis; L-threonine biosynthesis; L-threonine from L-aspartate: step 4/5. Functionally, catalyzes the ATP-dependent phosphorylation of L-homoserine to L-homoserine phosphate. This chain is Homoserine kinase, found in Photorhabdus laumondii subsp. laumondii (strain DSM 15139 / CIP 105565 / TT01) (Photorhabdus luminescens subsp. laumondii).